A 649-amino-acid polypeptide reads, in one-letter code: MFEIKARDAMGRLGVITINGKKIETPTIMPVIHPNPKKQTVSMDLINKLADVVITNSYITYTTPELREIAETKGIHELIDFKNVVVTDSGSFQLSVYGDVNVGPMEIIDFQEKIGVDVGTILDIPTGPDVSREKAESDLLETFKRAKDSIKRRKEMGYKLALNGTIQGSKYLDLRQKSAEVMGKMDFDIYPIGAVVPLMEDYRYREVAEVILNSKMHLPTNKPVHLFGCGHPMLFALSVALGCDLFDSAAYALYAKNGRYLTAEGTLHLEDMKDLKSFPCTCKVCSEYTPKQLFNLEEKEKTRLLAEHNLYVTFEEIDRIKNAIKEGNLWELVEERCRSHPKLLNGLRVISKYMDFIEKHDPVSKKSGFFYTGYESMDRPEIYRHKQRLERIQYDKIYVTSVSENTSKPYHENLSNVPCDVDVLIKDSVFGLVPLNIDTMYPLAQNEVPDLYDFEKKYNNEFVSEFREKHTEKILDISTYNYYINHYGKKKDCDKINPDIFRIGKMLEYQYGAKILDDELMGKVKSRRSKNTGRIRNLLLEKEVLFTLRANDNFLIPAKYGAELLHEKLEFPNYRIVIDSSVEEFARAGKSVYSKFVKDCDHELRPFEEVLIVNSDDDLLAYGTTILNGQELMEFDYGVAATLRGGIKK.

The Nucleophile role is filled by Asp-88. The substrate site is built by Asp-123 and Ala-194. Cys-280, Cys-282, and Cys-285 together coordinate Zn(2+). The PUA domain occupies 573-648 (NYRIVIDSSV…VAATLRGGIK (76 aa)).

This sequence belongs to the archaeosine tRNA-ribosyltransferase family. It depends on Zn(2+) as a cofactor.

The enzyme catalyses guanosine(15) in tRNA + 7-cyano-7-deazaguanine = 7-cyano-7-carbaguanosine(15) in tRNA + guanine. Its pathway is tRNA modification; archaeosine-tRNA biosynthesis. In terms of biological role, exchanges the guanine residue with 7-cyano-7-deazaguanine (preQ0) at position 15 in the dihydrouridine loop (D-loop) of archaeal tRNAs. The protein is tRNA-guanine(15) transglycosylase of Methanococcus maripaludis (strain C5 / ATCC BAA-1333).